Consider the following 335-residue polypeptide: Ferrochelatase (335 aa).

The Fe cation site is built by H194 and E275.

The protein belongs to the ferrochelatase family.

Its subcellular location is the cytoplasm. It carries out the reaction heme b + 2 H(+) = protoporphyrin IX + Fe(2+). It functions in the pathway porphyrin-containing compound metabolism; protoheme biosynthesis; protoheme from protoporphyrin-IX: step 1/1. In terms of biological role, catalyzes the ferrous insertion into protoporphyrin IX. The sequence is that of Ferrochelatase from Sodalis glossinidius (strain morsitans).